We begin with the raw amino-acid sequence, 222 residues long: MAHLVKMENGQSQTIQEMLGCIERYNPDHLKILESYVQDQAKNNTYDLEANLAVLKLYQFNPHMLNFDITYTILLKCLTNLPHTDFVMAKCLLLPQQMKDENVQTIIDLADILERADFTLFWQRAEVNRTMFRHITGFHDSIRKFVSHVVGTTFQTIKKDLLKELLGGIEDSTLENWIKRNGWKHQGHDLVVVATQDDKIKTKNITEKIEFENVGALMAQCI.

The PCI domain maps to 46–208; that stretch reads YDLEANLAVL…KIKTKNITEK (163 aa).

This sequence belongs to the eIF-3 subunit K family. As to quaternary structure, component of the eukaryotic translation initiation factor 3 (eIF-3) complex. The eIF-3 complex interacts with pix.

The protein resides in the cytoplasm. Its function is as follows. Component of the eukaryotic translation initiation factor 3 (eIF-3) complex, which is involved in protein synthesis of a specialized repertoire of mRNAs and, together with other initiation factors, stimulates binding of mRNA and methionyl-tRNAi to the 40S ribosome. The eIF-3 complex specifically targets and initiates translation of a subset of mRNAs involved in cell proliferation. The chain is Eukaryotic translation initiation factor 3 subunit K from Drosophila virilis (Fruit fly).